A 339-amino-acid polypeptide reads, in one-letter code: Dihydroorotate dehydrogenase (quinone) (339 aa).

Residues 61-65 and Thr85 each bind FMN; that span reads AGLDK. A substrate-binding site is contributed by Lys65. Position 110–114 (110–114) interacts with substrate; the sequence is NRMGF. The FMN site is built by Asn138 and Asn171. Position 171 (Asn171) interacts with substrate. Catalysis depends on Ser174, which acts as the Nucleophile. Asn176 provides a ligand contact to substrate. Residues Lys216 and Thr244 each contribute to the FMN site. 245–246 is a substrate binding site; sequence NT. Residues Gly267, Gly296, and 317–318 contribute to the FMN site; that span reads YS.

The protein belongs to the dihydroorotate dehydrogenase family. Type 2 subfamily. As to quaternary structure, monomer. Requires FMN as cofactor.

The protein resides in the cell membrane. It catalyses the reaction (S)-dihydroorotate + a quinone = orotate + a quinol. The protein operates within pyrimidine metabolism; UMP biosynthesis via de novo pathway; orotate from (S)-dihydroorotate (quinone route): step 1/1. Functionally, catalyzes the conversion of dihydroorotate to orotate with quinone as electron acceptor. The sequence is that of Dihydroorotate dehydrogenase (quinone) from Saccharophagus degradans (strain 2-40 / ATCC 43961 / DSM 17024).